The following is a 148-amino-acid chain: Lysozyme C (148 aa).

Positions 1–18 (MKALIILGLVLLSVTVQG) are cleaved as a signal peptide. The C-type lysozyme domain maps to 19–148 (KIFERCELAR…VSQYVKGCGV (130 aa)). Intrachain disulfides connect Cys24–Cys146, Cys48–Cys134, Cys83–Cys99, and Cys95–Cys113. Active-site residues include Glu53 and Asp71.

This sequence belongs to the glycosyl hydrolase 22 family. As to quaternary structure, monomer.

The protein resides in the secreted. It catalyses the reaction Hydrolysis of (1-&gt;4)-beta-linkages between N-acetylmuramic acid and N-acetyl-D-glucosamine residues in a peptidoglycan and between N-acetyl-D-glucosamine residues in chitodextrins.. In terms of biological role, lysozymes have primarily a bacteriolytic function; those in tissues and body fluids are associated with the monocyte-macrophage system and enhance the activity of immunoagents. This Pygathrix nemaeus (Red-shanked douc langur) protein is Lysozyme C (LYZ).